The chain runs to 75 residues: Serine rich endogenous peptide 4 (75 aa).

Residues 1–31 (MATKTSNLGHLLLSLFILLLFILSQVGVAQA) form the signal peptide. A disordered region spans residues 51-75 (PPPLRGIVKPPIASFHSASPKDKGP). The short motif at 61 to 75 (PIASFHSASPKDKGP) is the SCOOP motif element. The SxS motif essential for MIK2 binding motif lies at 67 to 69 (SAS).

The protein belongs to the serine rich endogenous peptide (SCOOP) phytocytokine family. Interacts with MIK2 (via extracellular leucine-rich repeat domain); this interaction triggers the formation of complex between MIK2 and the BAK1/SERK3 and SERK4 coreceptors, and subsequent BAK1 activation by phosphorylation. Mostly expressed in leaves and seedlings shoots, and, to a lower extent, in roots, stems, siliques, seeds and flowers.

The protein localises to the cell membrane. It localises to the secreted. It is found in the extracellular space. Its subcellular location is the apoplast. Its function is as follows. Brassicaceae-specific phytocytokine (plant endogenous peptide released into the apoplast) perceived by MIK2 in a BAK1/SERK3 and SERK4 coreceptors-dependent manner, that modulates various physiological and antimicrobial processes including growth prevention and reactive oxygen species (ROS) response regulation. Inhibits root growth. Prevents general growth and development. Exhibits antibacterial effects against Pseudomonas syringae pv. tomato DC3000, Ralstonia solanacearum, Bacillus subtilis and Agrobacterium tumefaciens, thus being an antimicrobial peptide (AMP). This chain is Serine rich endogenous peptide 4, found in Arabidopsis thaliana (Mouse-ear cress).